The chain runs to 153 residues: Pheromone-binding protein Gp-9 (153 aa).

An N-terminal signal peptide occupies residues 1–19 (MKTFVLHIFIFALVAFASA). 3 cysteine pairs are disulfide-bonded: C37–C77, C73–C129, and C118–C138.

This sequence belongs to the PBP/GOBP family. As to quaternary structure, homodimer.

It localises to the secreted. In terms of biological role, colony queen number, a major feature of social organization, is associated with worker genotype for Gp-9. Colonies are headed by either a single reproductive queen (monogyne form) or multiple queens (polygyne form). Differences in worker Gp-9 genotypes between social forms may cause differences in workers' abilities to recognize queens and regulate their numbers. The sequence is that of Pheromone-binding protein Gp-9 from Solenopsis substituta (Fire ant).